Here is a 312-residue protein sequence, read N- to C-terminus: Glyoxylate/hydroxypyruvate reductase A (312 aa).

The active site involves Arg-227. The active-site Proton donor is His-275.

The protein belongs to the D-isomer specific 2-hydroxyacid dehydrogenase family. GhrA subfamily.

Its subcellular location is the cytoplasm. The enzyme catalyses glycolate + NADP(+) = glyoxylate + NADPH + H(+). It catalyses the reaction (R)-glycerate + NAD(+) = 3-hydroxypyruvate + NADH + H(+). It carries out the reaction (R)-glycerate + NADP(+) = 3-hydroxypyruvate + NADPH + H(+). In terms of biological role, catalyzes the NADPH-dependent reduction of glyoxylate and hydroxypyruvate into glycolate and glycerate, respectively. In Escherichia coli (strain ATCC 8739 / DSM 1576 / NBRC 3972 / NCIMB 8545 / WDCM 00012 / Crooks), this protein is Glyoxylate/hydroxypyruvate reductase A.